We begin with the raw amino-acid sequence, 458 residues long: ATP synthase subunit beta (458 aa).

148–155 (GGAGVGKT) is an ATP binding site.

This sequence belongs to the ATPase alpha/beta chains family. In terms of assembly, F-type ATPases have 2 components, CF(1) - the catalytic core - and CF(0) - the membrane proton channel. CF(1) has five subunits: alpha(3), beta(3), gamma(1), delta(1), epsilon(1). CF(0) has three main subunits: a(1), b(2) and c(9-12). The alpha and beta chains form an alternating ring which encloses part of the gamma chain. CF(1) is attached to CF(0) by a central stalk formed by the gamma and epsilon chains, while a peripheral stalk is formed by the delta and b chains.

Its subcellular location is the cell inner membrane. The catalysed reaction is ATP + H2O + 4 H(+)(in) = ADP + phosphate + 5 H(+)(out). Produces ATP from ADP in the presence of a proton gradient across the membrane. The catalytic sites are hosted primarily by the beta subunits. This Laribacter hongkongensis (strain HLHK9) protein is ATP synthase subunit beta.